The sequence spans 881 residues: Cell wall protein PRY3 (881 aa).

A signal peptide spans 1–18 (MLEFPISVLLGCLVAVKA). In terms of domain architecture, SCP spans 30 to 144 (LNEHNKFRAL…TWNNYIVCSY (115 aa)). N-linked (GlcNAc...) asparagine glycosylation occurs at asparagine 101. The disordered stretch occupies residues 262 to 313 (VVSSDATSSTTTTSSVATSSSTTSSDPTSSTAAASSSDPASSSAAASSSAST). An N-linked (GlcNAc...) asparagine glycan is attached at asparagine 360. Disordered regions lie at residues 381–400 (AADD…VSEH) and 453–494 (VSST…NSAA). The segment covering 386 to 400 (QGSTSKEATSSVSEH) has biased composition (polar residues). Residues asparagine 488, asparagine 535, asparagine 547, and asparagine 569 are each glycosylated (N-linked (GlcNAc...) asparagine). The interval 579–611 (IDPTLDPTDNSASPTDNAKHTSTYGSSSTGASL) is disordered. Residues 585 to 594 (PTDNSASPTD) are compositionally biased toward polar residues. Low complexity predominate over residues 599 to 611 (TSTYGSSSTGASL). An N-linked (GlcNAc...) asparagine glycan is attached at asparagine 625. Disordered regions lie at residues 758–788 (LASD…TTTT) and 800–830 (PSST…MHQP). 2 stretches are compositionally biased toward low complexity: residues 776–788 (STSN…TTTT) and 808–820 (RTTT…STTS). The span at 821-830 (QQDGSAMHQP) shows a compositional bias: polar residues. Residue glycine 853 is the site of GPI-anchor amidated glycine attachment. A propeptide spans 854–881 (AATPLSIFQCNSLAGTIAAFVVAVLFAF) (removed in mature form).

The protein belongs to the CRISP family. Post-translationally, the GPI-anchor is attached to the protein in the endoplasmic reticulum and serves to target the protein to the cell surface. There, the glucosamine-inositol phospholipid moiety is cleaved off and the GPI-modified mannoprotein is covalently attached via its lipidless GPI glycan remnant to the 1,6-beta-glucan of the outer cell wall layer.

The protein localises to the secreted. It is found in the cell wall. It localises to the membrane. Functionally, the full-length isoform (isoform Long) is a daughter cell-specific cell wall protein required for efficient export of lipids such as acetylated sterols. Acts in detoxification of hydrophobic compounds. Involved in tolerance to organic solvents such as dimethyl sulfoxide (DMSO). Also plays a role as an inhibitor of mating. STE12 is utilized as a repressor of full-length PRY3 transcription, ensuring efficient mating. In terms of biological role, there is no evidence that production of the short PRY3 transcript (isoform Short) is anything more than an adventitious by-product of the mechanism responsible for the repression of the full-length transcript. Moreover, no disadvantage is detectable for cells unable to make the short transcript. The protein is Cell wall protein PRY3 (PRY3) of Saccharomyces cerevisiae (strain ATCC 204508 / S288c) (Baker's yeast).